The sequence spans 115 residues: uncharacterized protein (115 aa).

The N-terminal stretch at 1–26 (MNFKKTVVSALSISALALSVSGVASA) is a signal peptide. The 79-residue stretch at 36–114 (VKNISISPTH…AVFGKVYVTV (79 aa)) folds into the BIG2 domain.

This is an uncharacterized protein from Bacillus subtilis (strain 168).